The sequence spans 159 residues: Phosphopantetheine adenylyltransferase (159 aa).

T10 serves as a coordination point for substrate. ATP-binding positions include 10–11 and H18; that span reads TF. K42, M74, and R88 together coordinate substrate. ATP is bound by residues 89–91, E99, and 124–130; these read GLR and WSFISSS.

It belongs to the bacterial CoaD family. As to quaternary structure, homohexamer. Mg(2+) serves as cofactor.

The protein localises to the cytoplasm. The enzyme catalyses (R)-4'-phosphopantetheine + ATP + H(+) = 3'-dephospho-CoA + diphosphate. It participates in cofactor biosynthesis; coenzyme A biosynthesis; CoA from (R)-pantothenate: step 4/5. Reversibly transfers an adenylyl group from ATP to 4'-phosphopantetheine, yielding dephospho-CoA (dPCoA) and pyrophosphate. This chain is Phosphopantetheine adenylyltransferase, found in Yersinia enterocolitica serotype O:8 / biotype 1B (strain NCTC 13174 / 8081).